A 425-amino-acid polypeptide reads, in one-letter code: Succinate--CoA ligase [ADP-forming] subunit beta, mitochondrial (425 aa).

The transit peptide at 1–14 (NNHGLQIQQQQQRN) directs the protein to the mitochondrion. Residues 23-250 (MELLQEAGVS…SNSAYRQKKI (228 aa)) form the ATP-grasp domain. Lys-40 is modified (N6-acetyllysine). Phosphotyrosine is present on Tyr-46. Residue Lys-50 is modified to N6-acetyllysine; alternate. Lys-50 bears the N6-succinyllysine; alternate mark. ATP contacts are provided by residues Lys-60 and 67–69 (GRG). An N6-acetyllysine mark is found at Lys-91, Lys-101, Lys-105, and Lys-178. Mg(2+) is bound by residues Asn-220 and Asp-234. Ser-241 carries the phosphoserine modification. Asn-285 serves as a coordination point for substrate. Residue Thr-303 is modified to Phosphothreonine. At Lys-330 the chain carries N6-acetyllysine. 342–344 (GIM) contributes to the substrate binding site. Lys-400 is modified (N6-acetyllysine).

This sequence belongs to the succinate/malate CoA ligase beta subunit family. ATP-specific subunit beta subfamily. In terms of assembly, heterodimer of an alpha and a beta subunit. The beta subunit determines specificity for ATP. Interacts with ALAS2. It depends on Mg(2+) as a cofactor.

It is found in the mitochondrion. It catalyses the reaction succinate + ATP + CoA = succinyl-CoA + ADP + phosphate. It functions in the pathway carbohydrate metabolism; tricarboxylic acid cycle; succinate from succinyl-CoA (ligase route): step 1/1. ATP-specific succinyl-CoA synthetase functions in the citric acid cycle (TCA), coupling the hydrolysis of succinyl-CoA to the synthesis of ATP and thus represents the only step of substrate-level phosphorylation in the TCA. The beta subunit provides nucleotide specificity of the enzyme and binds the substrate succinate, while the binding sites for coenzyme A and phosphate are found in the alpha subunit. The chain is Succinate--CoA ligase [ADP-forming] subunit beta, mitochondrial from Sus scrofa (Pig).